A 416-amino-acid chain; its full sequence is NADH-quinone oxidoreductase subunit D (416 aa).

This sequence belongs to the complex I 49 kDa subunit family. As to quaternary structure, NDH-1 is composed of 14 different subunits. Subunits NuoB, C, D, E, F, and G constitute the peripheral sector of the complex.

It localises to the cell inner membrane. The catalysed reaction is a quinone + NADH + 5 H(+)(in) = a quinol + NAD(+) + 4 H(+)(out). Functionally, NDH-1 shuttles electrons from NADH, via FMN and iron-sulfur (Fe-S) centers, to quinones in the respiratory chain. The immediate electron acceptor for the enzyme in this species is believed to be ubiquinone. Couples the redox reaction to proton translocation (for every two electrons transferred, four hydrogen ions are translocated across the cytoplasmic membrane), and thus conserves the redox energy in a proton gradient. This is NADH-quinone oxidoreductase subunit D from Gluconacetobacter diazotrophicus (strain ATCC 49037 / DSM 5601 / CCUG 37298 / CIP 103539 / LMG 7603 / PAl5).